Here is a 247-residue protein sequence, read N- to C-terminus: NADH dehydrogenase [ubiquinone] flavoprotein 2, mitochondrial (247 aa).

Residues M1–H40 constitute a mitochondrion transit peptide. Residues C135, C140, C176, and C180 each contribute to the [2Fe-2S] cluster site. Residues N211 to L247 form a disordered region.

The protein belongs to the complex I 24 kDa subunit family. As to quaternary structure, complex I is composed of 45 different subunits. This is a component of the flavoprotein-sulfur (FP) fragment of the enzyme. [2Fe-2S] cluster is required as a cofactor.

It is found in the mitochondrion inner membrane. It carries out the reaction a ubiquinone + NADH + 5 H(+)(in) = a ubiquinol + NAD(+) + 4 H(+)(out). Core subunit of the mitochondrial membrane respiratory chain NADH dehydrogenase (Complex I) that is believed to belong to the minimal assembly required for catalysis. Complex I functions in the transfer of electrons from NADH to the respiratory chain. The immediate electron acceptor for the enzyme is believed to be ubiquinone. This Dictyostelium discoideum (Social amoeba) protein is NADH dehydrogenase [ubiquinone] flavoprotein 2, mitochondrial (ndufv2).